A 138-amino-acid chain; its full sequence is ATP synthase epsilon chain (138 aa).

This sequence belongs to the ATPase epsilon chain family. In terms of assembly, F-type ATPases have 2 components, CF(1) - the catalytic core - and CF(0) - the membrane proton channel. CF(1) has five subunits: alpha(3), beta(3), gamma(1), delta(1), epsilon(1). CF(0) has three main subunits: a, b and c.

Its subcellular location is the cell inner membrane. In terms of biological role, produces ATP from ADP in the presence of a proton gradient across the membrane. In Verminephrobacter eiseniae (strain EF01-2), this protein is ATP synthase epsilon chain.